The sequence spans 654 residues: RNA polymerase I-specific transcription initiation factor tif-1A (654 aa).

Residues 1 to 37 (MKRSTANAPKLSPKHESESDPKKVKLEEEAKPTVNQA) are disordered. The span at 13–31 (PKHESESDPKKVKLEEEAK) shows a compositional bias: basic and acidic residues.

It belongs to the RRN3 family.

The protein localises to the nucleus. The protein resides in the nucleolus. Required for efficient transcription initiation by RNA polymerase I (Pol I). In Caenorhabditis elegans, this protein is RNA polymerase I-specific transcription initiation factor tif-1A.